A 141-amino-acid polypeptide reads, in one-letter code: Large ribosomal subunit protein uL16 (141 aa).

Belongs to the universal ribosomal protein uL16 family. Part of the 50S ribosomal subunit.

Functionally, binds 23S rRNA and is also seen to make contacts with the A and possibly P site tRNAs. The sequence is that of Large ribosomal subunit protein uL16 from Campylobacter concisus (strain 13826).